The following is a 359-amino-acid chain: Alanine racemase (359 aa).

The Proton acceptor; specific for D-alanine role is filled by K34. At K34 the chain carries N6-(pyridoxal phosphate)lysine. Residue R129 coordinates substrate. Catalysis depends on Y254, which acts as the Proton acceptor; specific for L-alanine. Position 302 (M302) interacts with substrate.

Belongs to the alanine racemase family. It depends on pyridoxal 5'-phosphate as a cofactor.

The enzyme catalyses L-alanine = D-alanine. The protein operates within amino-acid biosynthesis; D-alanine biosynthesis; D-alanine from L-alanine: step 1/1. Functionally, catalyzes the interconversion of L-alanine and D-alanine. May also act on other amino acids. This Yersinia pestis protein is Alanine racemase (alr).